Reading from the N-terminus, the 128-residue chain is Glycine cleavage system H protein (128 aa).

Residues 23-105 (KVRIGITDFA…YEKAWMIVVE (83 aa)) form the Lipoyl-binding domain. Lys64 carries the post-translational modification N6-lipoyllysine.

The protein belongs to the GcvH family. In terms of assembly, the glycine cleavage system is composed of four proteins: P, T, L and H. It depends on (R)-lipoate as a cofactor.

The glycine cleavage system catalyzes the degradation of glycine. The H protein shuttles the methylamine group of glycine from the P protein to the T protein. In terms of biological role, is also involved in protein lipoylation via its role as an octanoyl/lipoyl carrier protein intermediate. The protein is Glycine cleavage system H protein of Halalkalibacterium halodurans (strain ATCC BAA-125 / DSM 18197 / FERM 7344 / JCM 9153 / C-125) (Bacillus halodurans).